Reading from the N-terminus, the 436-residue chain is Gamma-glutamyl phosphate reductase (436 aa).

Belongs to the gamma-glutamyl phosphate reductase family.

Its subcellular location is the cytoplasm. It carries out the reaction L-glutamate 5-semialdehyde + phosphate + NADP(+) = L-glutamyl 5-phosphate + NADPH + H(+). It participates in amino-acid biosynthesis; L-proline biosynthesis; L-glutamate 5-semialdehyde from L-glutamate: step 2/2. Its function is as follows. Catalyzes the NADPH-dependent reduction of L-glutamate 5-phosphate into L-glutamate 5-semialdehyde and phosphate. The product spontaneously undergoes cyclization to form 1-pyrroline-5-carboxylate. The protein is Gamma-glutamyl phosphate reductase of Prochlorococcus marinus (strain MIT 9301).